The chain runs to 309 residues: Mitochondrial glycine transporter (309 aa).

3 Solcar repeats span residues 2-94 (SNVG…LRAL), 124-207 (LTSQ…IKHE), and 219-304 (QATL…GLML). A run of 6 helical transmembrane segments spans residues 8-33 (LLSG…TRLQ), 69-95 (GTTP…RALM), 130-155 (LIAG…ARFE), 182-205 (GFLA…EGIK), 223-249 (IHGL…KTKI), and 279-297 (GASL…GWAV).

It belongs to the mitochondrial carrier (TC 2.A.29) family. SLC25A38 subfamily.

The protein resides in the mitochondrion inner membrane. It carries out the reaction glycine(in) = glycine(out). Functionally, mitochondrial glycine transporter that imports glycine into the mitochondrial matrix. Plays an important role in providing glycine for the first enzymatic step in heme biosynthesis, the condensation of glycine with succinyl-CoA to produce 5-aminolevulinate (ALA) in the mitochondrial matrix. The chain is Mitochondrial glycine transporter from Laccaria bicolor (strain S238N-H82 / ATCC MYA-4686) (Bicoloured deceiver).